Reading from the N-terminus, the 207-residue chain is MSLLIEQARYHLSAHNARQLPDDGGYEVAFAGRSNAGKSSALNALTRQNALARVSKTPGRTQQLVFFQIQPERYLVDLPGYGYAKVPQDLQAHWQAFIDRYFRTREALRGLVVVMDIRHPLKDYDLQMLGYAAERGLPAHGLLTKADKLGRGQQMQTLQKVKKEVTSRFGDSVTVQTYSGQSRQGVDELRGIVGGWLGLIAEPLAEH.

In terms of domain architecture, EngB-type G spans 24–199 (GGYEVAFAGR…RGIVGGWLGL (176 aa)). GTP contacts are provided by residues 32–39 (GRSNAGKS), 59–63 (GRTQQ), 77–80 (DLPG), 144–147 (TKAD), and 178–180 (YSG). Residues Ser39 and Thr61 each contribute to the Mg(2+) site.

Belongs to the TRAFAC class TrmE-Era-EngA-EngB-Septin-like GTPase superfamily. EngB GTPase family. Mg(2+) serves as cofactor.

Its function is as follows. Necessary for normal cell division and for the maintenance of normal septation. The sequence is that of Probable GTP-binding protein EngB from Xanthomonas oryzae pv. oryzae (strain MAFF 311018).